Consider the following 262-residue polypeptide: MQDKFIKKRHILEYEDKQLINVKLGITTREDGLSPYPHNAFNMARYIDDSQQNITKHQEMLATVIGFPREQWVFPIQTHENKVVKVTSNDKGTNIDALNDALHGVDALYTYEPNLLLTMCYADCVPIYFYSEKNHFIGLAHAGWRGTVGQIVNALISNIDFDLNDLNVVIGPATSTSYEINDDIKSKFETLPIDINQYIDTRGTDRHGIDLKRANALLLENAGVPKDNIYITNYATSEDLSLFFSYRVEKGNTGRMLAFIGQ.

Residues His79, Cys124, and His141 each contribute to the Zn(2+) site.

It belongs to the purine nucleoside phosphorylase YfiH/LACC1 family. In terms of assembly, homodimer. It depends on Cu(2+) as a cofactor. Requires Zn(2+) as cofactor.

It catalyses the reaction adenosine + phosphate = alpha-D-ribose 1-phosphate + adenine. The catalysed reaction is S-methyl-5'-thioadenosine + phosphate = 5-(methylsulfanyl)-alpha-D-ribose 1-phosphate + adenine. It carries out the reaction inosine + phosphate = alpha-D-ribose 1-phosphate + hypoxanthine. The enzyme catalyses adenosine + H2O + H(+) = inosine + NH4(+). In terms of biological role, purine nucleoside enzyme that catalyzes the phosphorolysis of adenosine and inosine nucleosides, yielding D-ribose 1-phosphate and the respective free bases, adenine and hypoxanthine. Also catalyzes the phosphorolysis of S-methyl-5'-thioadenosine into adenine and S-methyl-5-thio-alpha-D-ribose 1-phosphate. Also has adenosine deaminase activity. The polypeptide is Purine nucleoside phosphorylase SSP1584 (Staphylococcus saprophyticus subsp. saprophyticus (strain ATCC 15305 / DSM 20229 / NCIMB 8711 / NCTC 7292 / S-41)).